A 206-amino-acid chain; its full sequence is Transcriptional regulator GfcR (206 aa).

It belongs to the purine/pyrimidine phosphoribosyltransferase family. GfcR subfamily.

The protein is Transcriptional regulator GfcR of Methanosphaerula palustris (strain ATCC BAA-1556 / DSM 19958 / E1-9c).